The following is a 745-amino-acid chain: Fatty acid oxidation complex subunit alpha (745 aa).

The interval 47 to 209 is enoyl-CoA hydratase; that stretch reads VNTLKAKFAE…KMGLVDDVVP (163 aa). The tract at residues 325-745 is 3-hydroxyacyl-CoA dehydrogenase; sequence RAIHRVGVLG…LDEAAITAHN (421 aa).

It in the N-terminal section; belongs to the enoyl-CoA hydratase/isomerase family. The protein in the central section; belongs to the 3-hydroxyacyl-CoA dehydrogenase family. Heterotetramer of two alpha chains (FadJ) and two beta chains (FadI).

It localises to the cytoplasm. The enzyme catalyses a (3S)-3-hydroxyacyl-CoA = a (2E)-enoyl-CoA + H2O. The catalysed reaction is a 4-saturated-(3S)-3-hydroxyacyl-CoA = a (3E)-enoyl-CoA + H2O. It catalyses the reaction a (3S)-3-hydroxyacyl-CoA + NAD(+) = a 3-oxoacyl-CoA + NADH + H(+). It carries out the reaction (3S)-3-hydroxybutanoyl-CoA = (3R)-3-hydroxybutanoyl-CoA. It participates in lipid metabolism; fatty acid beta-oxidation. Its function is as follows. Catalyzes the formation of a hydroxyacyl-CoA by addition of water on enoyl-CoA. Also exhibits 3-hydroxyacyl-CoA epimerase and 3-hydroxyacyl-CoA dehydrogenase activities. In Yersinia enterocolitica serotype O:8 / biotype 1B (strain NCTC 13174 / 8081), this protein is Fatty acid oxidation complex subunit alpha.